Reading from the N-terminus, the 237-residue chain is Mannose-specific lectin alpha chain (237 aa).

Mn(2+) contacts are provided by E8 and D10. Residues D10, Y12, N14, and D19 each coordinate Ca(2+). Y12 contacts a carbohydrate. D19, H24, and S34 together coordinate Mn(2+). 99–100 (LY) serves as a coordination point for a carbohydrate. D208 contributes to the Ca(2+) binding site. R228 lines the a carbohydrate pocket.

It belongs to the leguminous lectin family. As to quaternary structure, homotetramer. Post-translationally, the beta and gamma chains are produced by partial proteolytic processing of the lectin alpha chain by an asparaginyl endopeptidase.

D-mannose/D-glucose-binding lectin. Also binds derivatives of glucose and mannose such as more complex glycans. The protein is Mannose-specific lectin alpha chain of Cymbosema roseum (Dioclea purpurea).